A 562-amino-acid chain; its full sequence is Protein FAM83D-A (562 aa).

Positions 424-471 (ITTQTTETSQCTTQTPAPTSSVARLSNSSNSSSSSFSSTSITSTGSNC) are disordered. Residues 425–471 (TTQTTETSQCTTQTPAPTSSVARLSNSSNSSSSSFSSTSITSTGSNC) show a composition bias toward low complexity.

The protein belongs to the FAM83 family.

It localises to the cytoplasm. Its subcellular location is the cytoskeleton. The protein resides in the spindle. It is found in the spindle pole. May regulate cell proliferation, growth, migration and epithelial to mesenchymal transition. May also be important for proper chromosome congression and alignment during mitosis. This Xenopus laevis (African clawed frog) protein is Protein FAM83D-A.